The sequence spans 119 residues: MRHYEIVFMVHPDQSDQVPAMVERYRSIVESSGGTVHRLEDWGRRQLAYPINKLIKAHYVLMNVECGKDELDELTSAFRFNDAVIRNMVLSRDEAVTEPSPLAKGNEKREDRKESEDAE.

A disordered region spans residues 95–119 (AVTEPSPLAKGNEKREDRKESEDAE). Residues 105 to 119 (GNEKREDRKESEDAE) show a composition bias toward basic and acidic residues.

Belongs to the bacterial ribosomal protein bS6 family.

In terms of biological role, binds together with bS18 to 16S ribosomal RNA. This Halorhodospira halophila (strain DSM 244 / SL1) (Ectothiorhodospira halophila (strain DSM 244 / SL1)) protein is Small ribosomal subunit protein bS6.